Here is a 264-residue protein sequence, read N- to C-terminus: Undecaprenyl-diphosphatase (264 aa).

The next 8 membrane-spanning stretches (helical) occupy residues 7–27 (IVIP…PVSS), 45–65 (TKIL…LFFY), 86–106 (IHVL…YNKI), 109–129 (LFNP…LIIA), 145–165 (INLV…YPGF), 186–206 (VNFS…LDLI), 215–235 (LNIP…FLLI), and 244–264 (KVSL…IYFI).

Belongs to the UppP family.

The protein localises to the cell membrane. It carries out the reaction di-trans,octa-cis-undecaprenyl diphosphate + H2O = di-trans,octa-cis-undecaprenyl phosphate + phosphate + H(+). In terms of biological role, catalyzes the dephosphorylation of undecaprenyl diphosphate (UPP). Confers resistance to bacitracin. This Buchnera aphidicola subsp. Schizaphis graminum (strain Sg) protein is Undecaprenyl-diphosphatase.